Consider the following 260-residue polypeptide: MSQQRPDRIKQMLHYLWQHRHLSTQQAMELFGYAEATVRRDFQYIVNQYPGMIRGHGCLDFDDSTDDKEYVFDVKRTLQSVAKREIAALARTMIKDGDCFFLDSGSTCLELAKCLADARVKVICNDIKIANELGCFPHVESYIIGGLIRPGYFSVGESLALEMINAFSVERAFISCDALSLETGITNATMFEVGVKTRIIQRSREVILMADHSKFDAVEPHAVATLSCIKTIISDSGLPETIAQRYQRAGCQLFLPHSIK.

The HTH deoR-type domain maps to 5-61 (RPDRIKQMLHYLWQHRHLSTQQAMELFGYAEATVRRDFQYIVNQYPGMIRGHGCLDF). A DNA-binding region (H-T-H motif) is located at residues 22 to 41 (LSTQQAMELFGYAEATVRRD).

Its function is as follows. Putative transcriptional regulator for the sgcREAQCX region. This chain is Putative sgc region transcriptional regulator (sgcR), found in Escherichia coli (strain K12).